Here is a 5043-residue protein sequence, read N- to C-terminus: Polyketide synthase PksJ (5043 aa).

Residues Ala141–Thr481 are adenylation 1. A Carrier 1 domain is found at Arg590–Glu667. Ser627 is subject to O-(pantetheine 4'-phosphoryl)serine. A condensation region spans residues Gln690–Asn989. The interval Thr1181–Val1578 is adenylation 2. One can recognise a Carrier 2 domain in the interval Thr1654–Arg1729. The residue at position 1689 (Ser1689) is an O-(pantetheine 4'-phosphoryl)serine. The Ketosynthase family 3 (KS3) 1 domain occupies Asp1760–Gln2186. Catalysis depends on for beta-ketoacyl synthase 1 activity residues Cys1932, His2068, and His2108. The segment at His2374–Glu2499 is N-terminal hotdog fold. The PKS/mFAS DH domain maps to His2374–Thr2661. The active-site Proton acceptor; for dehydratase activity is the His2403. The C-terminal hotdog fold stretch occupies residues Gly2513 to Thr2661. Asp2575 acts as the Proton donor; for dehydratase activity in catalysis. Carrier domains follow at residues Arg3114–Tyr3188 and Ser3212–His3286. Ser3148 and Ser3246 each carry O-(pantetheine 4'-phosphoryl)serine. The segment at Val3291 to Thr3314 is disordered. A Ketosynthase family 3 (KS3) 2 domain is found at Phe3339–Glu3779. Active-site for beta-ketoacyl synthase 2 activity residues include Cys3511, His3646, and His3695. Residues Arg3839 to Glu3872 adopt a coiled-coil conformation. The Carrier 5 domain occupies Gly4459–Tyr4536. Residue Ser4496 is modified to O-(pantetheine 4'-phosphoryl)serine. The region spanning Ala4588–Ala4992 is the Ketosynthase family 3 (KS3) 3 domain. Residue Cys4743 is the For beta-ketoacyl synthase 3 activity of the active site.

This sequence belongs to the ATP-dependent AMP-binding enzyme family. Pantetheine 4'-phosphate serves as cofactor.

It localises to the cytoplasm. It participates in antibiotic biosynthesis; bacillaene biosynthesis. Involved in some intermediate steps for the synthesis of the antibiotic polyketide bacillaene which is involved in secondary metabolism. This Bacillus subtilis (strain 168) protein is Polyketide synthase PksJ (pksJ).